The following is an 813-amino-acid chain: Xaa-Pro dipeptidyl-peptidase (813 aa).

Catalysis depends on charge relay system residues Ser-375, Asp-495, and His-526.

This sequence belongs to the peptidase S15 family. In terms of assembly, homodimer.

Its subcellular location is the cytoplasm. It carries out the reaction Hydrolyzes Xaa-Pro-|- bonds to release unblocked, N-terminal dipeptides from substrates including Ala-Pro-|-p-nitroanilide and (sequentially) Tyr-Pro-|-Phe-Pro-|-Gly-Pro-|-Ile.. In terms of biological role, removes N-terminal dipeptides sequentially from polypeptides having unsubstituted N-termini provided that the penultimate residue is proline. This chain is Xaa-Pro dipeptidyl-peptidase, found in Lactiplantibacillus plantarum (strain ATCC BAA-793 / NCIMB 8826 / WCFS1) (Lactobacillus plantarum).